The sequence spans 198 residues: Probable chemoreceptor glutamine deamidase CheD (198 aa).

This sequence belongs to the CheD family.

It carries out the reaction L-glutaminyl-[protein] + H2O = L-glutamyl-[protein] + NH4(+). Its function is as follows. Probably deamidates glutamine residues to glutamate on methyl-accepting chemotaxis receptors (MCPs), playing an important role in chemotaxis. This chain is Probable chemoreceptor glutamine deamidase CheD, found in Xanthomonas axonopodis pv. citri (strain 306).